We begin with the raw amino-acid sequence, 379 residues long: Succinate--CoA ligase [ADP-forming] subunit beta (379 aa).

An ATP-grasp domain is found at 9-237 (RDILARYGIP…SSDEPEAEQR (229 aa)). ATP contacts are provided by residues Lys45, 52-54 (GRG), Ile94, and Glu99. The Mg(2+) site is built by Asn192 and Asp206. Substrate contacts are provided by residues Asn257 and 314-316 (GIT).

The protein belongs to the succinate/malate CoA ligase beta subunit family. Heterotetramer of two alpha and two beta subunits. Mg(2+) is required as a cofactor.

The catalysed reaction is succinate + ATP + CoA = succinyl-CoA + ADP + phosphate. It carries out the reaction GTP + succinate + CoA = succinyl-CoA + GDP + phosphate. Its pathway is carbohydrate metabolism; tricarboxylic acid cycle; succinate from succinyl-CoA (ligase route): step 1/1. Succinyl-CoA synthetase functions in the citric acid cycle (TCA), coupling the hydrolysis of succinyl-CoA to the synthesis of either ATP or GTP and thus represents the only step of substrate-level phosphorylation in the TCA. The beta subunit provides nucleotide specificity of the enzyme and binds the substrate succinate, while the binding sites for coenzyme A and phosphate are found in the alpha subunit. The chain is Succinate--CoA ligase [ADP-forming] subunit beta from Roseiflexus sp. (strain RS-1).